Reading from the N-terminus, the 275-residue chain is MTLQQQIIKALGAKPQINAEEEIRRSIDFLKSYLQTYPFIKSLVLGISGGQDSTLAGKLCQMAINELRLETGNESLQFIAVRMPYGVQADEQDCQDAIAFIQPDRVLTVNIKGAVLASEQALREAGIELSDFVRGNEKARERMKAQYSIAGMTSGVVVGTDHAAEAITGFFTKYGDGGTDINPLYRLNKRQGKQLLTALGCPEHLYKKAPTADLEDDRPSLPDEVALGVTYDNIDDYLEGKNVPEQVARTIENWYLKTEHKRRPPITVFDDFWKK.

46–53 (GISGGQDS) serves as a coordination point for ATP. Aspartate 52 lines the Mg(2+) pocket. Arginine 140 is a deamido-NAD(+) binding site. Threonine 160 contacts ATP. Glutamate 165 lines the Mg(2+) pocket. Deamido-NAD(+)-binding residues include lysine 173 and aspartate 180. Lysine 189 and threonine 211 together coordinate ATP. Residue 260-261 (HK) participates in deamido-NAD(+) binding.

It belongs to the NAD synthetase family. As to quaternary structure, homodimer.

The enzyme catalyses deamido-NAD(+) + NH4(+) + ATP = AMP + diphosphate + NAD(+) + H(+). It functions in the pathway cofactor biosynthesis; NAD(+) biosynthesis; NAD(+) from deamido-NAD(+) (ammonia route): step 1/1. In terms of biological role, catalyzes the ATP-dependent amidation of deamido-NAD to form NAD. Uses ammonia as a nitrogen source. This Escherichia coli O8 (strain IAI1) protein is NH(3)-dependent NAD(+) synthetase.